Reading from the N-terminus, the 45-residue chain is MSKRTYQPNNRRRARVHGFRTRMRTRAGRAIVSARRRKGRKSLTA.

This sequence belongs to the bacterial ribosomal protein bL34 family.

This is Large ribosomal subunit protein bL34 from Corynebacterium urealyticum (strain ATCC 43042 / DSM 7109).